We begin with the raw amino-acid sequence, 131 residues long: Phosphoribosyl-AMP cyclohydrolase (131 aa).

Asp90 serves as a coordination point for Mg(2+). A Zn(2+)-binding site is contributed by Cys91. Positions 92 and 94 each coordinate Mg(2+). Residues Cys107 and Cys114 each contribute to the Zn(2+) site.

It belongs to the PRA-CH family. As to quaternary structure, homodimer. Mg(2+) is required as a cofactor. Zn(2+) serves as cofactor.

The protein localises to the cytoplasm. It carries out the reaction 1-(5-phospho-beta-D-ribosyl)-5'-AMP + H2O = 1-(5-phospho-beta-D-ribosyl)-5-[(5-phospho-beta-D-ribosylamino)methylideneamino]imidazole-4-carboxamide. The protein operates within amino-acid biosynthesis; L-histidine biosynthesis; L-histidine from 5-phospho-alpha-D-ribose 1-diphosphate: step 3/9. Functionally, catalyzes the hydrolysis of the adenine ring of phosphoribosyl-AMP. This is Phosphoribosyl-AMP cyclohydrolase from Hyphomonas neptunium (strain ATCC 15444).